The sequence spans 482 residues: MKFIIKLFPEITIKSQSVRLRFIKILTGNIRNVLKHYDETLAVVRHWDNIEVRAKDENQRLVIRDALTRIPGIHHILEVEDVPFTDMHDIFEKALAQYREQLEGKTFCVRVKRRGKHEFSSIEVERYVGGGLNQHIESARVKLTNPDVTVHLEVEDDRLLLIKGRYEGIGGFPIGTQEDVLSLISGGFDSGVSSYMLMRRGCRVHYCFFNLGGAAHEIGVRQVAHYLWNRFGSSHRVRFVAINFEPVVGEILEKVDDGQMGVVLKRMMVRAASKVAERYGVQALVTGEALGQVSSQTLTNLRLIDNVSDTLILRPLISYDKEHIINLARQIGTEDFARTMPEYCGVISKSPTVKAIKAKIEAEEENFDFSILDKVVEEANNVDIREIAQQTQQEVVEVETVSGFGPNDVILDIRSVDEQDDKPLKVEGVDVVSLPFYKLSTKFGDLDQSKTWLLWCERGVMSRLQALYLREQGFANVKVYRP.

One can recognise a THUMP domain in the interval 61-165 (LVIRDALTRI…DDRLLLIKGR (105 aa)). ATP is bound by residues 183–184 (LI), lysine 265, glycine 287, and glutamine 296. An intrachain disulfide couples cysteine 344 to cysteine 456. In terms of domain architecture, Rhodanese spans 404–482 (FGPNDVILDI…GFANVKVYRP (79 aa)). The active-site Cysteine persulfide intermediate is the cysteine 456.

This sequence belongs to the ThiI family.

Its subcellular location is the cytoplasm. It carries out the reaction [ThiI sulfur-carrier protein]-S-sulfanyl-L-cysteine + a uridine in tRNA + 2 reduced [2Fe-2S]-[ferredoxin] + ATP + H(+) = [ThiI sulfur-carrier protein]-L-cysteine + a 4-thiouridine in tRNA + 2 oxidized [2Fe-2S]-[ferredoxin] + AMP + diphosphate. It catalyses the reaction [ThiS sulfur-carrier protein]-C-terminal Gly-Gly-AMP + S-sulfanyl-L-cysteinyl-[cysteine desulfurase] + AH2 = [ThiS sulfur-carrier protein]-C-terminal-Gly-aminoethanethioate + L-cysteinyl-[cysteine desulfurase] + A + AMP + 2 H(+). Its pathway is cofactor biosynthesis; thiamine diphosphate biosynthesis. Its function is as follows. Catalyzes the ATP-dependent transfer of a sulfur to tRNA to produce 4-thiouridine in position 8 of tRNAs, which functions as a near-UV photosensor. Also catalyzes the transfer of sulfur to the sulfur carrier protein ThiS, forming ThiS-thiocarboxylate. This is a step in the synthesis of thiazole, in the thiamine biosynthesis pathway. The sulfur is donated as persulfide by IscS. The polypeptide is tRNA sulfurtransferase (Salmonella typhimurium (strain LT2 / SGSC1412 / ATCC 700720)).